Consider the following 182-residue polypeptide: UPF0398 protein RBAM_020340 (182 aa).

This sequence belongs to the UPF0398 family.

This is UPF0398 protein RBAM_020340 from Bacillus velezensis (strain DSM 23117 / BGSC 10A6 / LMG 26770 / FZB42) (Bacillus amyloliquefaciens subsp. plantarum).